Here is an 89-residue protein sequence, read N- to C-terminus: Small ribosomal subunit protein uS15 (89 aa).

Belongs to the universal ribosomal protein uS15 family. As to quaternary structure, part of the 30S ribosomal subunit. Forms a bridge to the 50S subunit in the 70S ribosome, contacting the 23S rRNA.

One of the primary rRNA binding proteins, it binds directly to 16S rRNA where it helps nucleate assembly of the platform of the 30S subunit by binding and bridging several RNA helices of the 16S rRNA. Functionally, forms an intersubunit bridge (bridge B4) with the 23S rRNA of the 50S subunit in the ribosome. This chain is Small ribosomal subunit protein uS15, found in Thermosynechococcus vestitus (strain NIES-2133 / IAM M-273 / BP-1).